A 50-amino-acid chain; its full sequence is Photosystem I reaction center subunit IX (50 aa).

A helical membrane pass occupies residues Tyr7 to Ile27.

The protein belongs to the PsaJ family.

Its subcellular location is the plastid. It is found in the chloroplast thylakoid membrane. In terms of biological role, may help in the organization of the PsaE and PsaF subunits. In Pinus koraiensis (Korean pine), this protein is Photosystem I reaction center subunit IX.